We begin with the raw amino-acid sequence, 422 residues long: Putative nickel insertion protein (422 aa).

This sequence belongs to the LarC family.

The protein is Putative nickel insertion protein of Synechocystis sp. (strain ATCC 27184 / PCC 6803 / Kazusa).